A 750-amino-acid polypeptide reads, in one-letter code: Photosystem I P700 chlorophyll a apoprotein A1 (750 aa).

8 helical membrane-spanning segments follow: residues 72 to 95 (VFSA…FHGA), 158 to 181 (LYST…FHYH), 197 to 221 (LNHH…HVSL), 293 to 311 (TAHH…GHMY), 348 to 371 (WHAQ…HHMY), 387 to 413 (LSIF…IFMV), 435 to 457 (AIIS…LYIH), and 532 to 550 (FLVH…LILL). [4Fe-4S] cluster-binding residues include C574 and C583. Transmembrane regions (helical) follow at residues 590–611 (HVFL…HFSW) and 664–686 (LSAY…MFLF). Chlorophyll a' is bound at residue H675. Residues M683 and Y691 each coordinate chlorophyll a. W692 contacts phylloquinone. The chain crosses the membrane as a helical span at residues 724 to 744 (AVGVAHYLLGGIATTWAFFLA).

Belongs to the PsaA/PsaB family. As to quaternary structure, the PsaA/B heterodimer binds the P700 chlorophyll special pair and subsequent electron acceptors. PSI consists of a core antenna complex that captures photons, and an electron transfer chain that converts photonic excitation into a charge separation. The eukaryotic PSI reaction center is composed of at least 11 subunits. P700 is a chlorophyll a/chlorophyll a' dimer, A0 is one or more chlorophyll a, A1 is one or both phylloquinones and FX is a shared 4Fe-4S iron-sulfur center. serves as cofactor.

The protein resides in the plastid. The protein localises to the chloroplast thylakoid membrane. It carries out the reaction reduced [plastocyanin] + hnu + oxidized [2Fe-2S]-[ferredoxin] = oxidized [plastocyanin] + reduced [2Fe-2S]-[ferredoxin]. Its function is as follows. PsaA and PsaB bind P700, the primary electron donor of photosystem I (PSI), as well as the electron acceptors A0, A1 and FX. PSI is a plastocyanin-ferredoxin oxidoreductase, converting photonic excitation into a charge separation, which transfers an electron from the donor P700 chlorophyll pair to the spectroscopically characterized acceptors A0, A1, FX, FA and FB in turn. Oxidized P700 is reduced on the lumenal side of the thylakoid membrane by plastocyanin. The polypeptide is Photosystem I P700 chlorophyll a apoprotein A1 (Chlorokybus atmophyticus (Soil alga)).